The following is an 855-amino-acid chain: RE1-silencing transcription factor (855 aa).

Residues 141–163 (FFCKPCQYQGENEQEFIVHIRTH) form a C2H2-type 1 zinc finger. The interval 172 to 199 (NGGDSDEDLSADAGPQTSVPNAESAESN) is disordered. The segment covering 186–199 (PQTSVPNAESAESN) has biased composition (polar residues). 7 consecutive C2H2-type zinc fingers follow at residues 204–226 (IRCERCGYNTNRFDHYMAHLKHH), 236–258 (FKCTICAYTTISQYHWKKHLRNH), 264–286 (FTCSQCSYFSDRKNNYIQHIRTH), 292–314 (FQCIYCEYSSSQKTHLTRHMRTH), 320–343 (FKCDNCSYLAANQHEVTRHARQVH), 349–371 (LSCPYCQYKTADRSNFKKHVELH), and 377–400 (FLCPVCKYAASKKCNLQYHIKSRH). Residues 458-811 (NAVVETEKSS…ETPTEERDAS (354 aa)) form a disordered region. Composition is skewed to basic and acidic residues over residues 462–472 (ETEKSSKKNMD), 481–496 (NEKKSSSKNDPKEKTA), and 504–535 (AVKDTEETQTEDTRVNNKKETKKAVKSAEKAL). Positions 548–569 (SSVQQQSDDCEQTQHTPQQNET) are enriched in polar residues. The span at 570 to 580 (QENRPEKENRS) shows a compositional bias: basic and acidic residues. The span at 594-604 (QTKKPCKKQTK) shows a compositional bias: basic residues. Positions 628–638 (RKAENPAEPKQ) are enriched in basic and acidic residues. Basic residues predominate over residues 639–648 (RIKRTKKKKD). The segment covering 652-662 (PTTSEANQTNP) has biased composition (polar residues). Basic and acidic residues-rich tracts occupy residues 711–721 (PAVEDVQRPLE) and 799–811 (KLPETPTEERDAS). The segment at 818 to 840 (HTCIFCDRSFALEMDYRKHLNRH) adopts a C2H2-type 9 zinc-finger fold.

Its subcellular location is the nucleus. The protein resides in the cytoplasm. Functionally, transcriptional repressor which binds neuron-restrictive silencer element (NRSE) and represses neuronal gene transcription in non-neuronal cells. This chain is RE1-silencing transcription factor (rest), found in Danio rerio (Zebrafish).